A 529-amino-acid chain; its full sequence is FAD-binding monooxygenase BOA2 (529 aa).

FAD is bound by residues 58–61 (VWWK), 70–71 (DI), and tyrosine 76. Position 68-70 (68-70 (ACD)) interacts with NADP(+). Residues 198–204 (TGPSACQ) and 221–222 (RS) each bind NADP(+).

Belongs to the FAD-binding monooxygenase family. It depends on FAD as a cofactor.

The protein operates within polyketide biosynthesis. Functionally, FAD-binding monooxygenase; part of the gene cluster A that mediates the biosynthesis of botcinic acid and its botcinin derivatives, acetate-derived polyketides that contribute to virulence when combined with the sesquiterpene botrydial. Botcinic acid and its derivatives have been shown to induce chlorosis and necrosis during host plant infection, but also have antifungal activities. Two polyketide synthases, BOA6 and BOA9, are involved in the biosynthesis of botcinins. BOA6 mediates the formation of the per-methylated tetraketide core by condensation of four units of malonyl-CoA with one unit of acetyl-CoA, which would be methylated in activated methylene groups to yield a bicyclic acid intermediate that could then either be converted to botrylactone derivatives or lose the starter acetate unit through a retro-Claisen type C-C bond cleavage to yield botcinin derivatives. The second polyketide synthase, BOA9, is probably required for the biosynthesis of the tetraketide side chain of botcinins. The methyltransferase (MT) domain within BOA6 is probably responsible for the incorporation of four methyl groups. The trans-enoyl reductase BOA5 might take over the enoyl reductase function of BOA6 that misses an ER domain. The monooxygenases BOA2, BOA3 and BOA4 might be involved in further hydroxylations at C4, C5 and C8, whereas BOA7, close to BOA9, could potentially be involved in the hydroxylation at C4 in the side chain of botcinins. The sequence is that of FAD-binding monooxygenase BOA2 from Botryotinia fuckeliana (strain B05.10) (Noble rot fungus).